Here is a 493-residue protein sequence, read N- to C-terminus: 3-ketoacyl-CoA synthase 16 (493 aa).

Positions 1–35 (MDYPMKKVKIFFNYLMAHRFKLCFLPLMVAIAVEA) are cleaved as a signal peptide. The chain crosses the membrane as a helical span at residues 52 to 74 (NNHTSLTMFFLYLALGSTLYLMT). The 296-residue stretch at 71–366 (YLMTRPKPVY…FFVRFVKKKF (296 aa)) folds into the FAE domain. Catalysis depends on residues cysteine 221, histidine 300, histidine 384, histidine 388, histidine 417, and asparagine 421.

The protein belongs to the thiolase-like superfamily. Chalcone/stilbene synthases family. In terms of tissue distribution, expressed in siliques.

The protein localises to the membrane. It carries out the reaction a very-long-chain acyl-CoA + malonyl-CoA + H(+) = a very-long-chain 3-oxoacyl-CoA + CO2 + CoA. It functions in the pathway lipid metabolism; fatty acid biosynthesis. The protein is 3-ketoacyl-CoA synthase 16 of Arabidopsis thaliana (Mouse-ear cress).